We begin with the raw amino-acid sequence, 108 residues long: BH3-like motif-containing cell death inducer (108 aa).

The BH3-like signature appears at 5–12 (LPIEGQEI).

In terms of tissue distribution, ubiquitously expressed.

Its subcellular location is the cytoplasm. The protein localises to the mitochondrion. Functionally, functions as a proapoptotic molecule through the caspase-dependent mitochondrial pathway of cell death. The chain is BH3-like motif-containing cell death inducer (BLID) from Homo sapiens (Human).